A 367-amino-acid chain; its full sequence is Outer membrane porin C (367 aa).

Residues Met1 to Ala21 form the signal peptide.

The protein belongs to the Gram-negative porin family. In terms of assembly, homotrimer.

It is found in the cell outer membrane. In terms of biological role, forms pores that allow passive diffusion of small molecules across the outer membrane. The protein is Outer membrane porin C (ompC) of Escherichia coli O157:H7.